The chain runs to 510 residues: MIWHVQNENFILDSTRIFMKAFHLLLFDGSFIFPECILIFGLILLLIIDSTSDQKDIPWLYFISSTSLVMSITTLLFRWREEPMISFSGNFQTNNFNEIFQFLILLCSTLCIPLSVEYIECTEMALTEFLLFVLTATLGGMFLCGANDLITIFVAPECFSLCSYLLSGYTKKDVRSNEATTKYLLMGGTSSSILVHGFSWLYGSSGGEIELQEIVNGLINTQMYNSPGISIALIFITVGIGFKLSPAPSHQWTPDVYEGSPTPVVAFLSVTSKVAASASATRIFDIPFYFSSNEWHLLLEILAILSMILGNLIAITQTSMKRMLAYSSIGQIGYVIIGIIVGDSNDGYASMITYMLFYISMNLGTFACIVLFGLRTGTDNIRDYAGLYTKDPFLALSLALCLLSLGGLPPLAGFFGKLYLFWCGWQAGLYLLVLIGLLTSVLSIYYYLKIIKLLMTGRNQEITPHVRNYRRSPLRSKNSIELSMIVCVIASTIPGISMNPIIAIAQDTLF.

The next 13 helical transmembrane spans lie at 28–48 (DGSFIFPECILIFGLILLLII), 57–77 (IPWLYFISSTSLVMSITTLLF), 99–119 (IFQFLILLCSTLCIPLSVEYI), 124–144 (MALTEFLLFVLTATLGGMFLC), 149–169 (LITIFVAPECFSLCSYLLSGY), 183–203 (YLLMGGTSSSILVHGFSWLYG), 227–247 (PGISIALIFITVGIGFKLSPA), 295–315 (WHLLLEILAILSMILGNLIAI), 323–343 (MLAYSSIGQIGYVIIGIIVGD), 354–374 (YMLFYISMNLGTFACIVLFGL), 395–415 (ALSLALCLLSLGGLPPLAGFF), 418–438 (LYLFWCGWQAGLYLLVLIGLL), and 484–504 (MIVCVIASTIPGISMNPIIAI).

Belongs to the complex I subunit 2 family. In terms of assembly, NDH is composed of at least 16 different subunits, 5 of which are encoded in the nucleus.

The protein resides in the plastid. The protein localises to the chloroplast thylakoid membrane. It catalyses the reaction a plastoquinone + NADH + (n+1) H(+)(in) = a plastoquinol + NAD(+) + n H(+)(out). The catalysed reaction is a plastoquinone + NADPH + (n+1) H(+)(in) = a plastoquinol + NADP(+) + n H(+)(out). Its function is as follows. NDH shuttles electrons from NAD(P)H:plastoquinone, via FMN and iron-sulfur (Fe-S) centers, to quinones in the photosynthetic chain and possibly in a chloroplast respiratory chain. The immediate electron acceptor for the enzyme in this species is believed to be plastoquinone. Couples the redox reaction to proton translocation, and thus conserves the redox energy in a proton gradient. The protein is NAD(P)H-quinone oxidoreductase subunit 2, chloroplastic of Silene latifolia (White campion).